Consider the following 509-residue polypeptide: Scavenger receptor class B member 1 (509 aa).

Residues 1–11 (MGGSARARWVA) are Cytoplasmic-facing. The chain crosses the membrane as a helical span at residues 12 to 32 (VGLGVVGLLCAVLGVVMILVM). Residues 33-440 (PSLIKQQVLK…YTQLVLMPQV (408 aa)) lie on the Extracellular side of the membrane. Residues N102, N108, N173, N212, N227, N255, N310, N330, and N383 are each glycosylated (N-linked (GlcNAc...) asparagine). A disulfide bond links C251 and C384. A helical membrane pass occupies residues 441–461 (LQYVQYVLLGLGGLLLLVPVI). The Cytoplasmic portion of the chain corresponds to 462-509 (YQLRSQEKCFLFWSGSKKGSQDKEAIQAYSESLMSPAAKGTVLQEAKL).

It belongs to the CD36 family. In terms of processing, N-glycosylated. The six cysteines of the extracellular domain are all involved in intramolecular disulfide bonds.

The protein localises to the cell membrane. Its subcellular location is the membrane. It localises to the caveola. Functionally, receptor for different ligands such as phospholipids, cholesterol ester, lipoproteins, phosphatidylserine and apoptotic cells. Receptor for HDL, mediating selective uptake of cholesteryl ether and HDL-dependent cholesterol efflux. Also facilitates the flux of free and esterified cholesterol between the cell surface and apoB-containing lipoproteins and modified lipoproteins, although less efficiently than HDL. May be involved in the phagocytosis of apoptotic cells, via its phosphatidylserine binding activity. The protein is Scavenger receptor class B member 1 (SCARB1) of Cricetulus griseus (Chinese hamster).